A 101-amino-acid polypeptide reads, in one-letter code: Small ribosomal subunit protein cS23 (101 aa).

It belongs to the chloroplast-specific ribosomal protein cS23 family. As to quaternary structure, part of the 30S ribosomal subunit.

It is found in the plastid. The protein resides in the chloroplast. In terms of biological role, probably a ribosomal protein or a ribosome-associated protein. The polypeptide is Small ribosomal subunit protein cS23 (ycf65) (Euglena stellata).